Reading from the N-terminus, the 255-residue chain is Ciliogenesis and planar polarity effector 2 (255 aa).

The interval 52-255 (PADIASYKLF…VIAGLVGGAD (204 aa)) is small GTPase-like. GTP-binding positions include 64–71 (GRSGAGKT) and 177–180 (TKLD).

The protein belongs to the small GTPase superfamily. Rab family.

The protein localises to the cytoplasm. It is found in the cytoskeleton. Its subcellular location is the cilium basal body. In terms of biological role, potential effector of the planar cell polarity signaling pathway. Plays a role in targeted membrane trafficking most probably at the level of vesicle fusion with membranes. Involved in cilium biogenesis by regulating the transport of cargo proteins to the basal body and to the apical tips of cilia. More generally involved in exocytosis in secretory cells. This is Ciliogenesis and planar polarity effector 2 (cplane2) from Xenopus tropicalis (Western clawed frog).